A 616-amino-acid chain; its full sequence is Dihydroxy-acid dehydratase (616 aa).

D81 is a binding site for Mg(2+). Residue C122 participates in [2Fe-2S] cluster binding. Residues D123 and K124 each contribute to the Mg(2+) site. K124 bears the N6-carboxylysine mark. C195 provides a ligand contact to [2Fe-2S] cluster. Mg(2+) is bound at residue E491. S517 acts as the Proton acceptor in catalysis.

The protein belongs to the IlvD/Edd family. Homodimer. It depends on [2Fe-2S] cluster as a cofactor. The cofactor is Mg(2+).

The catalysed reaction is (2R)-2,3-dihydroxy-3-methylbutanoate = 3-methyl-2-oxobutanoate + H2O. It carries out the reaction (2R,3R)-2,3-dihydroxy-3-methylpentanoate = (S)-3-methyl-2-oxopentanoate + H2O. It participates in amino-acid biosynthesis; L-isoleucine biosynthesis; L-isoleucine from 2-oxobutanoate: step 3/4. The protein operates within amino-acid biosynthesis; L-valine biosynthesis; L-valine from pyruvate: step 3/4. In terms of biological role, functions in the biosynthesis of branched-chain amino acids. Catalyzes the dehydration of (2R,3R)-2,3-dihydroxy-3-methylpentanoate (2,3-dihydroxy-3-methylvalerate) into 2-oxo-3-methylpentanoate (2-oxo-3-methylvalerate) and of (2R)-2,3-dihydroxy-3-methylbutanoate (2,3-dihydroxyisovalerate) into 2-oxo-3-methylbutanoate (2-oxoisovalerate), the penultimate precursor to L-isoleucine and L-valine, respectively. The polypeptide is Dihydroxy-acid dehydratase (Shewanella woodyi (strain ATCC 51908 / MS32)).